A 116-amino-acid polypeptide reads, in one-letter code: Endocuticle structural glycoprotein SgAbd-4 (116 aa).

Q1 carries the pyrrolidone carboxylic acid modification. Residues 20 to 92 (DGSYQWNYET…PQGAHFPTPP (73 aa)) form the Chitin-binding type R&amp;R domain. O-linked (HexNAc...) threonine glycans are attached at residues T90 and T107. Residue S110 is glycosylated (O-linked (HexNAc...) serine). An O-linked (HexNAc...) threonine glycan is attached at T111. Residue P116 is modified to Proline amide.

Its function is as follows. Component of the abdominal endocuticle. In Schistocerca gregaria (Desert locust), this protein is Endocuticle structural glycoprotein SgAbd-4.